Reading from the N-terminus, the 188-residue chain is Elongation factor P 1 (188 aa).

The protein belongs to the elongation factor P family.

It localises to the cytoplasm. It functions in the pathway protein biosynthesis; polypeptide chain elongation. Functionally, involved in peptide bond synthesis. Stimulates efficient translation and peptide-bond synthesis on native or reconstituted 70S ribosomes in vitro. Probably functions indirectly by altering the affinity of the ribosome for aminoacyl-tRNA, thus increasing their reactivity as acceptors for peptidyl transferase. The polypeptide is Elongation factor P 1 (efp1) (Porphyromonas gingivalis (strain ATCC BAA-308 / W83)).